The chain runs to 218 residues: Protein N-lysine methyltransferase METTL21A (218 aa).

Residues Trp47, 73-75 (GAG), Asp94, Trp125, and Ala143 contribute to the S-adenosyl-L-methionine site.

This sequence belongs to the methyltransferase superfamily. METTL21 family. As to quaternary structure, interacts with heat shock 70 family members; at least some of these proteins are methylation substrates.

The protein localises to the cytoplasm. It catalyses the reaction L-lysyl-[protein] + 3 S-adenosyl-L-methionine = N(6),N(6),N(6)-trimethyl-L-lysyl-[protein] + 3 S-adenosyl-L-homocysteine + 3 H(+). Protein-lysine methyltransferase that selectively trimethylates residues in heat shock protein 70 (HSP70) family members. Contributes to the in vivo trimethylation of Lys residues in HSPA1 and HSPA8. In vitro methylates 'Lys-561' in HSPA1, 'Lys-564' in HSPA2, 'Lys-585' in HSPA5, 'Lys-563' in HSPA6 and 'Lys-561' in HSPA8. The protein is Protein N-lysine methyltransferase METTL21A (METTL21A) of Bos taurus (Bovine).